Reading from the N-terminus, the 358-residue chain is Peptide chain release factor 1 (358 aa).

Glutamine 235 bears the N5-methylglutamine mark.

This sequence belongs to the prokaryotic/mitochondrial release factor family. Post-translationally, methylated by PrmC. Methylation increases the termination efficiency of RF1.

Its subcellular location is the cytoplasm. Functionally, peptide chain release factor 1 directs the termination of translation in response to the peptide chain termination codons UAG and UAA. The protein is Peptide chain release factor 1 of Neisseria gonorrhoeae (strain ATCC 700825 / FA 1090).